We begin with the raw amino-acid sequence, 431 residues long: Protein SHQ1 homolog (431 aa).

This sequence belongs to the SHQ1 family.

Required for the quantitative accumulation of H/ACA ribonucleoproteins (RNPs). This is Protein SHQ1 homolog from Caenorhabditis elegans.